Consider the following 140-residue polypeptide: Translation initiation factor 2 subunit beta (140 aa).

This sequence belongs to the eIF-2-beta/eIF-5 family. As to quaternary structure, heterotrimer composed of an alpha, a beta and a gamma chain.

Its function is as follows. eIF-2 functions in the early steps of protein synthesis by forming a ternary complex with GTP and initiator tRNA. The polypeptide is Translation initiation factor 2 subunit beta (Pyrococcus furiosus (strain ATCC 43587 / DSM 3638 / JCM 8422 / Vc1)).